Reading from the N-terminus, the 194-residue chain is Fe/S biogenesis protein NfuA (194 aa).

Cys152 and Cys155 together coordinate [4Fe-4S] cluster.

The protein belongs to the NfuA family. In terms of assembly, homodimer. [4Fe-4S] cluster is required as a cofactor.

In terms of biological role, involved in iron-sulfur cluster biogenesis. Binds a 4Fe-4S cluster, can transfer this cluster to apoproteins, and thereby intervenes in the maturation of Fe/S proteins. Could also act as a scaffold/chaperone for damaged Fe/S proteins. In Teredinibacter turnerae (strain ATCC 39867 / T7901), this protein is Fe/S biogenesis protein NfuA.